We begin with the raw amino-acid sequence, 248 residues long: 3-deoxy-manno-octulosonate cytidylyltransferase (248 aa).

Belongs to the KdsB family.

It localises to the cytoplasm. The catalysed reaction is 3-deoxy-alpha-D-manno-oct-2-ulosonate + CTP = CMP-3-deoxy-beta-D-manno-octulosonate + diphosphate. The protein operates within nucleotide-sugar biosynthesis; CMP-3-deoxy-D-manno-octulosonate biosynthesis; CMP-3-deoxy-D-manno-octulosonate from 3-deoxy-D-manno-octulosonate and CTP: step 1/1. It functions in the pathway bacterial outer membrane biogenesis; lipopolysaccharide biosynthesis. In terms of biological role, activates KDO (a required 8-carbon sugar) for incorporation into bacterial lipopolysaccharide in Gram-negative bacteria. The chain is 3-deoxy-manno-octulosonate cytidylyltransferase from Citrobacter koseri (strain ATCC BAA-895 / CDC 4225-83 / SGSC4696).